The primary structure comprises 529 residues: Probable feruloyl esterase B-1 (529 aa).

A signal peptide spans 1 to 19 (MKISYFFVASLSYVSVARA). 2 disulfides stabilise this stretch: cysteine 27–cysteine 75 and cysteine 63–cysteine 114. N-linked (GlcNAc...) asparagine glycans are attached at residues asparagine 53, asparagine 64, asparagine 85, asparagine 98, and asparagine 138. 4 disulfides stabilise this stretch: cysteine 187–cysteine 445, cysteine 256–cysteine 273, cysteine 282–cysteine 295, and cysteine 505–cysteine 527. The Acyl-ester intermediate role is filled by serine 188. N-linked (GlcNAc...) asparagine glycosylation occurs at asparagine 233. 5 residues coordinate Ca(2+): aspartate 257, aspartate 260, alanine 262, aspartate 264, and leucine 266. N-linked (GlcNAc...) asparagine glycans are attached at residues asparagine 286, asparagine 290, and asparagine 354. Active-site charge relay system residues include aspartate 404 and histidine 444.

Belongs to the tannase family.

It is found in the secreted. The enzyme catalyses feruloyl-polysaccharide + H2O = ferulate + polysaccharide.. Its function is as follows. Involved in degradation of plant cell walls. Hydrolyzes the feruloyl-arabinose ester bond in arabinoxylans as well as the feruloyl-galactose and feruloyl-arabinose ester bonds in pectin. The protein is Probable feruloyl esterase B-1 (faeB-1) of Aspergillus terreus (strain NIH 2624 / FGSC A1156).